Consider the following 152-residue polypeptide: Transcriptional regulator MraZ (152 aa).

2 consecutive SpoVT-AbrB domains span residues 5-52 (ATLV…TLPE) and 81-124 (ASEC…DETT).

The protein belongs to the MraZ family. As to quaternary structure, forms oligomers.

It localises to the cytoplasm. It is found in the nucleoid. Its function is as follows. Negatively regulates its own expression and that of the subsequent genes in the proximal part of the division and cell wall (dcw) gene cluster. Acts by binding directly to DNA. May also regulate the expression of genes outside the dcw cluster. The sequence is that of Transcriptional regulator MraZ from Enterobacter sp. (strain 638).